A 78-amino-acid chain; its full sequence is Small, acid-soluble spore protein Tlp (78 aa).

Residues 32 to 78 (SEEQLSFASEAEQEQIREKNERRNESIEAMRNEIHDEAEARKNGYHQ) are disordered. Basic and acidic residues predominate over residues 45–78 (EQIREKNERRNESIEAMRNEIHDEAEARKNGYHQ).

This sequence belongs to the Tlp family.

The protein resides in the spore core. This is Small, acid-soluble spore protein Tlp from Bacillus licheniformis (strain ATCC 14580 / DSM 13 / JCM 2505 / CCUG 7422 / NBRC 12200 / NCIMB 9375 / NCTC 10341 / NRRL NRS-1264 / Gibson 46).